The primary structure comprises 760 residues: Protein HEADING DATE 3B (760 aa).

2 stretches are compositionally biased toward gly residues: residues methionine 1–glycine 12 and serine 60–glycine 70. 4 disordered regions span residues methionine 1–lysine 120, serine 144–aspartate 169, valine 236–serine 262, and threonine 285–threonine 346. Residues serine 71–glutamine 87 are compositionally biased toward low complexity. Polar residues predominate over residues serine 94 to glycine 107. Residues histidine 108–lysine 120 are compositionally biased toward basic and acidic residues. The span at valine 236–glutamate 248 shows a compositional bias: basic and acidic residues. Positions lysine 349–glutamate 355 match the Nuclear localization signal motif. 2 disordered regions span residues leucine 485–leucine 543 and phenylalanine 707–aspartate 760. 3 stretches are compositionally biased toward polar residues: residues glutamine 511–lysine 522, alanine 531–leucine 543, and phenylalanine 707–valine 730.

In terms of tissue distribution, expressed in mesophyll cells of young leaves, anthers, stigmas and the top of lemmas.

The protein localises to the nucleus. Its function is as follows. Involved in the regulation of flowering time under short day (SD) and long day (LD) conditions. Functions as a floral promoter by negatively regulating GHD7, a repressor of the photoperiodic control of flowering. Acts as a floral activator in the LD photoperiodic pathway. Involved in blue light-induced activation of EHD1 expression to promote flowering under SD conditions. This chain is Protein HEADING DATE 3B (HD3B), found in Oryza sativa subsp. japonica (Rice).